A 507-amino-acid chain; its full sequence is Lysine--tRNA ligase (507 aa).

The Mg(2+) site is built by glutamate 416 and glutamate 423.

It belongs to the class-II aminoacyl-tRNA synthetase family. Homodimer. Requires Mg(2+) as cofactor.

The protein localises to the cytoplasm. It catalyses the reaction tRNA(Lys) + L-lysine + ATP = L-lysyl-tRNA(Lys) + AMP + diphosphate. The polypeptide is Lysine--tRNA ligase (Hahella chejuensis (strain KCTC 2396)).